The primary structure comprises 601 residues: Putative purine permease C1399.01c (601 aa).

12 consecutive transmembrane segments (helical) span residues 64-84 (VPVL…VGGV), 102-122 (TNYL…IQIA), 131-151 (YYIG…VSVA), 179-199 (YGAF…MSFI), 207-227 (LFPP…LISS), 264-284 (GWGS…IIII), 294-314 (TTSV…TGYW), 337-357 (IYGP…MEAI), 424-444 (FFCA…AVFV), 450-470 (VLGG…IAII), 481-501 (FILT…DWFT), and 522-542 (LVME…NLIL).

Belongs to the nucleobase:cation symporter-2 (NCS2) (TC 2.A.40) family.

The protein localises to the vacuole membrane. The protein is Putative purine permease C1399.01c of Schizosaccharomyces pombe (strain 972 / ATCC 24843) (Fission yeast).